A 911-amino-acid chain; its full sequence is Facilitated trehalose transporter Tret1 (911 aa).

The tract at residues 1-256 (MSGRDNRGAG…RIGFQQQKAT (256 aa)) is disordered. The Cytoplasmic segment spans residues 1-446 (MSGRDNRGAG…VYRPTTNPIY (446 aa)). Residues 8–19 (GAGGGGGGGGGG) are compositionally biased toward gly residues. Residues 32-50 (KLKEKLTRAGEELGYHRVE) are compositionally biased toward basic and acidic residues. Low complexity-rich tracts occupy residues 51–64 (SNLSTSNTGTSLDT), 76–129 (AAPQ…QQLR), and 156–166 (QQIHVQQQQQQ). Phosphoserine occurs at positions 302, 303, and 304. The interval 334 to 355 (VLQGSSTDSDEEGDDAEHKRLI) is disordered. Ser374 and Ser376 each carry phosphoserine. The interval 380 to 402 (FLTSRQNFQQQRSISTDSRKSRR) is disordered. The span at 384–395 (RQNFQQQRSIST) shows a compositional bias: polar residues. Residues 447 to 467 (IWTQVLAALSVSLGSLVVGFA) form a helical membrane-spanning segment. Residues 468-494 (SAYTSPALVSMTNTNLTSFVVTPQAAS) lie on the Extracellular side of the membrane. N-linked (GlcNAc...) asparagine glycosylation occurs at Asn482. Residues 495–515 (WVGGIMPLAGLAGGIAGGPFI) form a helical membrane-spanning segment. At 516-527 (EYLGRRNTILAT) the chain is on the cytoplasmic side. The chain crosses the membrane as a helical span at residues 528 to 548 (AVPFIVSWLLIACAVNVIMVL). The Extracellular segment spans residues 549-551 (CGR). Residues 552 to 572 (FLAGFCVGIASLSLPVYLGET) form a helical membrane-spanning segment. The Cytoplasmic portion of the chain corresponds to 573-578 (VQPEVR). Residues 579–599 (GTLGLLPTAFGNIGILLCFVA) form a helical membrane-spanning segment. Residues 600–606 (GTYMDWS) are Extracellular-facing. A helical transmembrane segment spans residues 607–627 (MLAFLGASLPVPFLILMFLIP). The Cytoplasmic segment spans residues 628-690 (ETPRWYVSRG…ELLKRSNLKP (63 aa)). Residues 691–711 (LSISLGLMFFQQLSGINAVIF) traverse the membrane as a helical segment. Topologically, residues 712-727 (YTVQIFQDAGSTIDGN) are extracellular. A helical membrane pass occupies residues 728 to 748 (VCTIIVGVVNFAATFIATILI). Residues 749–754 (DRAGRK) lie on the Cytoplasmic side of the membrane. The chain crosses the membrane as a helical span at residues 755 to 775 (VLLYVSNVMMVLTLFVLGGFF). At 776-794 (YCKSSGMDTSNVGWLPLSC) the chain is on the extracellular side. Residues 795–815 (FVIYILGFSLGFGPIPWLMMG) traverse the membrane as a helical segment. The Cytoplasmic segment spans residues 816–821 (EILPAK). Residues 822–842 (IRGSAASVATAFNWSCTFVVT) form a helical membrane-spanning segment. Over 843–855 (KSFQDMIDFMGAH) the chain is Extracellular. A helical transmembrane segment spans residues 856–876 (GAFWMFGAICFIGLFFVIFYV). Topologically, residues 877-911 (PETQGKTLEDIERKMMGRVRRMSSVANIKPLSFNM) are cytoplasmic. Phosphoserine occurs at positions 899 and 900.

It belongs to the major facilitator superfamily. Sugar transporter (TC 2.A.1.1) family. Trehalose transporter subfamily.

The protein resides in the cell membrane. Low-capacity facilitative transporter for trehalose. Does not transport maltose, sucrose or lactose. Mediates the bidirectional transfer of trehalose. Responsible for the transport of trehalose synthesized in the fat body and the incorporation of trehalose into other tissues that require a carbon source, thereby regulating trehalose levels in the hemolymph. The protein is Facilitated trehalose transporter Tret1 of Drosophila virilis (Fruit fly).